A 428-amino-acid polypeptide reads, in one-letter code: Putative FBD-associated F-box protein At5g56390 (428 aa).

One can recognise an F-box domain in the interval 2–50; that stretch reads DKISQLHDELLLGILSLLPNAKDVVATMVLSKRWRYLWMMVPSLVYDDS. The 51-residue stretch at 344-394 folds into the FBD domain; it reads CWNETSLVPEYLLPSLETFEWVDYEGTKTEKQVVAFILRIASCLKQATIVS.

In Arabidopsis thaliana (Mouse-ear cress), this protein is Putative FBD-associated F-box protein At5g56390.